A 230-amino-acid chain; its full sequence is Cytidylate kinase (230 aa).

12–20 (GPSGAGKGT) is an ATP binding site.

The protein belongs to the cytidylate kinase family. Type 1 subfamily.

Its subcellular location is the cytoplasm. The enzyme catalyses CMP + ATP = CDP + ADP. The catalysed reaction is dCMP + ATP = dCDP + ADP. The protein is Cytidylate kinase of Shewanella baltica (strain OS223).